The following is a 505-amino-acid chain: tRNA-2-methylthio-N(6)-dimethylallyladenosine synthase (505 aa).

One can recognise an MTTase N-terminal domain in the interval 14–132 (RTYEVRTYGC…LPVLLERARV (119 aa)). The [4Fe-4S] cluster site is built by Cys23, Cys61, Cys95, Cys169, Cys173, and Cys176. Residues 155–386 (RESAYAAWVS…ALQEEISWDE (232 aa)) enclose the Radical SAM core domain. One can recognise a TRAM domain in the interval 388-456 (KKQVGRTLEL…PHHLLAEGAV (69 aa)).

The protein belongs to the methylthiotransferase family. MiaB subfamily. As to quaternary structure, monomer. [4Fe-4S] cluster serves as cofactor.

It localises to the cytoplasm. It catalyses the reaction N(6)-dimethylallyladenosine(37) in tRNA + (sulfur carrier)-SH + AH2 + 2 S-adenosyl-L-methionine = 2-methylsulfanyl-N(6)-dimethylallyladenosine(37) in tRNA + (sulfur carrier)-H + 5'-deoxyadenosine + L-methionine + A + S-adenosyl-L-homocysteine + 2 H(+). Its function is as follows. Catalyzes the methylthiolation of N6-(dimethylallyl)adenosine (i(6)A), leading to the formation of 2-methylthio-N6-(dimethylallyl)adenosine (ms(2)i(6)A) at position 37 in tRNAs that read codons beginning with uridine. This is tRNA-2-methylthio-N(6)-dimethylallyladenosine synthase from Streptomyces coelicolor (strain ATCC BAA-471 / A3(2) / M145).